Here is a 1229-residue protein sequence, read N- to C-terminus: Phosphorylase b kinase regulatory subunit alpha, liver isoform (1229 aa).

The span at 625-646 (DSLLEDDEEQEEEEEDKFEDDY) shows a compositional bias: acidic residues. Residues 625–648 (DSLLEDDEEQEEEEEDKFEDDYNN) are disordered. A calmodulin-binding region spans residues 825–855 (LEELYIQAGACKEWGLIRYISGILRKRVEVL). The disordered stretch occupies residues 1024 to 1050 (EIKQRCSSPSTPSGILSPVGPGPADGQ). Over residues 1028–1037 (RCSSPSTPSG) the composition is skewed to polar residues. The tract at residues 1052 to 1092 (HWVERQGQWLRRRRLDGAINRVPVGFYQKVWKILQKCHGLS) is calmodulin-binding. Residue C1226 is the site of S-farnesyl cysteine attachment.

Belongs to the phosphorylase b kinase regulatory chain family. Polymer of 16 chains, four each of alpha, beta, gamma, and delta. Alpha and beta are regulatory chains, gamma is the catalytic chain, and delta is calmodulin. In terms of processing, although the final Cys may be farnesylated, the terminal tripeptide is probably not removed, and the C-terminus is not methylated.

It localises to the cell membrane. Its pathway is glycan biosynthesis; glycogen metabolism. With respect to regulation, by phosphorylation of various serine residues and by calcium. Its function is as follows. Phosphorylase b kinase catalyzes the phosphorylation of serine in certain substrates, including troponin I. The alpha chain may bind calmodulin. In Takifugu rubripes (Japanese pufferfish), this protein is Phosphorylase b kinase regulatory subunit alpha, liver isoform (phka2).